A 430-amino-acid chain; its full sequence is Target of rapamycin complex 1 subunit toc1 (430 aa).

2 positions are modified to phosphoserine: Ser204 and Ser399.

The target of rapamycin complex 1 (TORC1) is composed of at least mip1, pop3/wat1, tco89, toc1 and tor2.

It localises to the cytoplasm. Component of TORC1, which regulates multiple cellular processes to control cell growth in response to environmental signals. Tor2 is essential for growth. Nutrient limitation and environmental stress signals cause inactivation of TORC1. Active TORC1 positively controls cell growth and ribosome biogenesis by regulating ribosomal protein gene expression. TORC1 negatively controls G1 cell-cycle arrest, sexual development and amino acid uptake. Represses mating, meiosis and sporulation efficiency by interfering with the functions of the transcription factor ste11 and the meiosis-promoting RNA-binding protein mei2. This chain is Target of rapamycin complex 1 subunit toc1, found in Schizosaccharomyces pombe (strain 972 / ATCC 24843) (Fission yeast).